Reading from the N-terminus, the 601-residue chain is Glutamyl-tRNA(Gln) amidotransferase subunit B, mitochondrial (601 aa).

A mitochondrion-targeting transit peptide spans 1–52 (MLQQWLRQSPRAARVLRGSCCRGPQSGSLRHSPLPTAPHRCIRSLQTSATES).

The protein belongs to the GatB/GatE family. GatB subfamily. As to quaternary structure, subunit of the heterotrimeric GatCAB amidotransferase (AdT) complex, composed of A, B and C subunits.

Its subcellular location is the mitochondrion. It catalyses the reaction L-glutamyl-tRNA(Gln) + L-glutamine + ATP + H2O = L-glutaminyl-tRNA(Gln) + L-glutamate + ADP + phosphate + H(+). Allows the formation of correctly charged Gln-tRNA(Gln) through the transamidation of misacylated Glu-tRNA(Gln) in the mitochondria. The reaction takes place in the presence of glutamine and ATP through an activated gamma-phospho-Glu-tRNA(Gln). The polypeptide is Glutamyl-tRNA(Gln) amidotransferase subunit B, mitochondrial (Aspergillus fumigatus (strain ATCC MYA-4609 / CBS 101355 / FGSC A1100 / Af293) (Neosartorya fumigata)).